The chain runs to 136 residues: uncharacterized protein (136 aa).

The tract at residues 1–100 (MQSREPSGWR…PCSGGPDRPE (100 aa)) is disordered. A compositionally biased stretch (basic residues) spans 66–75 (RLLRWHHRVP).

This is an uncharacterized protein from Homo sapiens (Human).